The chain runs to 95 residues: HssA/B-like protein 45 (95 aa).

A disordered region spans residues 1-31; that stretch reads MTLFSSISSISNPMTSSKSSIASFGSGTSMS.

It belongs to the hssA/B family.

The chain is HssA/B-like protein 45 (hssl45) from Dictyostelium discoideum (Social amoeba).